A 115-amino-acid polypeptide reads, in one-letter code: Aspartate 1-decarboxylase (115 aa).

The active-site Schiff-base intermediate with substrate; via pyruvic acid is the serine 25. Serine 25 is modified (pyruvic acid (Ser)). Position 57 (threonine 57) interacts with substrate. Catalysis depends on tyrosine 58, which acts as the Proton donor. 73–75 (GPA) is a substrate binding site.

The protein belongs to the PanD family. Heterooctamer of four alpha and four beta subunits. The cofactor is pyruvate. In terms of processing, is synthesized initially as an inactive proenzyme, which is activated by self-cleavage at a specific serine bond to produce a beta-subunit with a hydroxyl group at its C-terminus and an alpha-subunit with a pyruvoyl group at its N-terminus.

It is found in the cytoplasm. It carries out the reaction L-aspartate + H(+) = beta-alanine + CO2. Its pathway is cofactor biosynthesis; (R)-pantothenate biosynthesis; beta-alanine from L-aspartate: step 1/1. Functionally, catalyzes the pyruvoyl-dependent decarboxylation of aspartate to produce beta-alanine. The protein is Aspartate 1-decarboxylase of Cytophaga hutchinsonii (strain ATCC 33406 / DSM 1761 / CIP 103989 / NBRC 15051 / NCIMB 9469 / D465).